Reading from the N-terminus, the 249-residue chain is MWIGVISLFPEMFRAITEHGVTGRAVKSGLLQIECWNPRDFTHDKHRTVDDRPYGGGPGMLMMVQPLRDAIHAAKQAAGDGAKVIYLSPQGRKLTQAGVTELATNQKLILVAGRYEGIDERVIQTEVDEEWSIGDYVLSGGELPAMTLIDAVSRLVPGVLGDQASAEQDSFTDGLLDHPHYTRPELLDGLAVPEALTSGNHEVIRRWRLKQSLGRTWQRRPELINNLALTDEQESLLAEYVREVRDSVK.

S-adenosyl-L-methionine contacts are provided by residues glycine 113 and 133–138; that span reads IGDYVL.

The protein belongs to the RNA methyltransferase TrmD family. In terms of assembly, homodimer.

The protein localises to the cytoplasm. The catalysed reaction is guanosine(37) in tRNA + S-adenosyl-L-methionine = N(1)-methylguanosine(37) in tRNA + S-adenosyl-L-homocysteine + H(+). Specifically methylates guanosine-37 in various tRNAs. This chain is tRNA (guanine-N(1)-)-methyltransferase, found in Aeromonas hydrophila subsp. hydrophila (strain ATCC 7966 / DSM 30187 / BCRC 13018 / CCUG 14551 / JCM 1027 / KCTC 2358 / NCIMB 9240 / NCTC 8049).